We begin with the raw amino-acid sequence, 101 residues long: Small ribosomal subunit protein uS14 (101 aa).

Belongs to the universal ribosomal protein uS14 family. Part of the 30S ribosomal subunit. Contacts proteins S3 and S10.

Binds 16S rRNA, required for the assembly of 30S particles and may also be responsible for determining the conformation of the 16S rRNA at the A site. The polypeptide is Small ribosomal subunit protein uS14 (Cellvibrio japonicus (strain Ueda107) (Pseudomonas fluorescens subsp. cellulosa)).